Here is a 606-residue protein sequence, read N- to C-terminus: Scavenger receptor class A member 3 (606 aa).

Residues 1–56 lie on the Cytoplasmic side of the membrane; the sequence is MKVRSAGSDRDVLCVTEEDLAGEDEDMPSFPCTQEGRAGPRCNRCQKNLSLHTSVR. A helical; Signal-anchor for type II membrane protein membrane pass occupies residues 57-77; sequence ILYLFLTLLLVAVAVLASLVF. Over 78-606 the chain is Extracellular; the sequence is RKVDSLSEDI…PGPPGNQSPY (529 aa). N-linked (GlcNAc...) asparagine glycosylation is found at Asn115, Asn182, Asn224, Asn257, Asn313, Asn337, Asn365, Asn400, Asn430, and Asn451. The segment at 455-606 is disordered; the sequence is IRGVPGPPGP…PGPPGNQSPY (152 aa). Collagen-like domains follow at residues 456-558 and 559-601; these read RGVP…PGPS and GPQG…GPPG. Over residues 497–516 the composition is skewed to low complexity; sequence PQGQPGEPGPVGERGPAGPR. Positions 526–535 are enriched in gly residues; it reads GSFGTGGPRG. 2 stretches are compositionally biased toward pro residues: residues 548-558 and 591-606; these read PEGPPGSPGPS and PGLP…QSPY.

It is found in the endoplasmic reticulum membrane. Its subcellular location is the golgi apparatus membrane. In terms of biological role, seems to protect cells by scavenging oxidative molecules or harmful products of oxidation. This chain is Scavenger receptor class A member 3 (Scara3), found in Mus musculus (Mouse).